The sequence spans 332 residues: RNA polymerase principal sigma factor HrdD (332 aa).

The tract at residues 1–25 is disordered; it reads MATRAVARRQSATGETADSASSVRA. The span at 10-22 shows a compositional bias: polar residues; that stretch reads QSATGETADSASS. The Polymerase core binding signature appears at 124-137; that stretch reads DLIQEGNAGLVRAV. Residues 294–313 constitute a DNA-binding region (H-T-H motif); the sequence is LTEVGKEHGLTRERIRQIEK.

Belongs to the sigma-70 factor family.

In terms of biological role, sigma factors are initiation factors that promote the attachment of RNA polymerase to specific initiation sites and are then released. This Streptomyces viridifaciens protein is RNA polymerase principal sigma factor HrdD (hrdD).